Here is a 407-residue protein sequence, read N- to C-terminus: Melanoma-associated antigen B6 (407 aa).

A disordered region spans residues 1–175 (MPRGHKSKLR…YDVAAEGEDE (175 aa)). Composition is skewed to polar residues over residues 18–29 (TNGQPQGLTGPQ), 57–71 (DASI…SPTG), 94–113 (PSTS…SPTG), and 136–155 (PSTS…SPTG). Positions 195–394 (VKKKACTLAQ…GLYPHLYEDA (200 aa)) constitute an MAGE domain.

As to expression, expressed in testis. Not expressed in other normal tissues, but is expressed in tumors of different histological origins.

The chain is Melanoma-associated antigen B6 (MAGEB6) from Homo sapiens (Human).